The sequence spans 198 residues: Probable GTP-binding protein EngB (198 aa).

Positions 22–195 constitute an EngB-type G domain; the sequence is NRNEVAFVGR…IDKLFLEFAT (174 aa). GTP is bound by residues 30–37, 57–61, 75–78, 142–145, and 174–176; these read GRSNVGKS, GKTRL, DLPG, TKSD, and YSS. Mg(2+)-binding residues include serine 37 and threonine 59.

This sequence belongs to the TRAFAC class TrmE-Era-EngA-EngB-Septin-like GTPase superfamily. EngB GTPase family. Requires Mg(2+) as cofactor.

In terms of biological role, necessary for normal cell division and for the maintenance of normal septation. The polypeptide is Probable GTP-binding protein EngB (Clostridium botulinum (strain Alaska E43 / Type E3)).